We begin with the raw amino-acid sequence, 375 residues long: Pectate lyase B (375 aa).

The N-terminal stretch at 1 to 22 (MKSLITPIAAGLLLAFSQYSLA) is a signal peptide. A disulfide bridge connects residues C93 and C176. Residues D150, D152, E187, and D191 each contribute to the Ca(2+) site. Residue R240 is part of the active site. A disulfide bond links C351 and C374.

Belongs to the polysaccharide lyase 1 family. PLADES subfamily. The cofactor is Ca(2+).

The protein resides in the secreted. It catalyses the reaction Eliminative cleavage of (1-&gt;4)-alpha-D-galacturonan to give oligosaccharides with 4-deoxy-alpha-D-galact-4-enuronosyl groups at their non-reducing ends.. It participates in glycan metabolism; pectin degradation; 2-dehydro-3-deoxy-D-gluconate from pectin: step 2/5. Its function is as follows. Involved in maceration and soft-rotting of plant tissue. In Dickeya chrysanthemi (Pectobacterium chrysanthemi), this protein is Pectate lyase B (pelB).